The following is a 698-amino-acid chain: MGDPGLAKLQFAPFNSALDVGFWHELTQKKLNEYRLDEAPKDIKGYYYNGDSAGLPTRLTLEFSAFDMSASTPAHCCPAMGTLHNTNTLEAFKTADKKLLLEQSANEIWEAIKSGAALENPMLLNKFLLLTFADLKKYHFYYWFCCPALCLPESIPLIRGPVSLDQRLSPKQIQALEHAYDDLCRAEGVTALPYFLFKYDDDTVLVSLLKHYSDFFQGQRTKITVGVYDPCNLAQYPGWPLRNFLVLAAHRWSGSFQSVEVLCFRDRTMQGARDVTHSIIFEVKLPEMAFSPDCPKAVGWEKNQKGGMGPRMVNLSGCMDPKRLAESSVDLNLKLMCWRLVPTLDLDKVVSVKCLLLGAGTLGCNVARTLMGWGVRHVTFVDNAKISYSNPVRQPLYEFEDCLGGGKPKALAAAERLQKIFPGVNARGFNMSIPMPGHPVNFSDVTMEQARRDVEQLEQLIDNHDVIFLLMDTRESRWLPTVIAASKRKLVINAALGFDTFVVMRHGLKKPKQQGAGDLCPSHLVAPADLGSSLFANIPGYKLGCYFCNDVVAPGDSTRDRTLDQQCTVSRPGLAVIAGALAVELMVSVLQHPEGGYAIASSSDDRMNEPPTSLGLVPHQIRGFLSRFDNVLPVSLAFDKCTACSPKVLDQYEREGFTFLAKVFNSSHSFLEDLTGLTLLHQETQAAEIWDMSDEETV.

Positions 11–13 match the FAP motif motif; sequence FAP. Lys-41 participates in a covalent cross-link: Glycyl lysine isopeptide (Lys-Gly) (interchain with G-Cter in ubiquitin). The active-site Glycyl thioester intermediate is Cys-567. Ser-693 carries the post-translational modification Phosphoserine.

Belongs to the ATG7 family. As to quaternary structure, homodimer. Interacts with ATG3; this interaction is essential for the transfer of ATG8-like proteins's thioester from ATG7 to ATG3 and plays a role in the conjugation of ATG12 to ATG5. Interacts with ATG12. Interacts with ATG10. Forms intermediate conjugates with GABARAPL1. Forms intermediate conjugates with ATG8-like proteins such as GABARAP, GABARAPL2 or MAP1LC3A. Interacts with EP300 acetyltransferase. Interacts with FOXO1. Post-translationally, acetylated by EP300. Polyubiquitinated on Lys-41 via 'Lys-63'-linked ubiquitin by TRIM32; this modification positiely regulates ATG8 and ATG12 activating enzyme activity leading to initiation of autophagy under metabolic stress. As to expression, widely expressed, especially in kidney, liver, lymph nodes and bone marrow.

The protein resides in the cytoplasm. The protein localises to the preautophagosomal structure. E1-like activating enzyme involved in the 2 ubiquitin-like systems required for cytoplasm to vacuole transport (Cvt) and autophagy. Activates ATG12 for its conjugation with ATG5 as well as the ATG8 family proteins for their conjugation with phosphatidylethanolamine. Both systems are needed for the ATG8 association to Cvt vesicles and autophagosomes membranes. Facilitates LC3-I lipidation with phosphatidylethanolamine to form LC3-II which is found on autophagosomal membranes. Required for autophagic death induced by caspase-8 inhibition. Required for mitophagy which contributes to regulate mitochondrial quantity and quality by eliminating the mitochondria to a basal level to fulfill cellular energy requirements and preventing excess ROS production. Modulates p53/TP53 activity to regulate cell cycle and survival during metabolic stress. Also plays a key role in the maintenance of axonal homeostasis, the prevention of axonal degeneration, the maintenance of hematopoietic stem cells, the formation of Paneth cell granules, as well as in adipose differentiation. Plays a role in regulating the liver clock and glucose metabolism by mediating the autophagic degradation of CRY1 (clock repressor) in a time-dependent manner. The polypeptide is Ubiquitin-like modifier-activating enzyme ATG7 (Mus musculus (Mouse)).